The following is a 506-amino-acid chain: MTDAENTKPELPKNVRVRFCPSPTGTPHVGMIRTALFNWAEARATGGTLIFRIEDTDAVRDSEESYNQILESLRWLGIDWDEGIDVGGPHGPYRQSERTAIYKDVAAKLLEAGYAYESFSTPEEIKERNLAAGRPAEFGYDGYDRNLTDEQKAAFRAEGRKPALRIKMPDEDIAFDDLIRGTIEFKAGSVPDYVIVRPNGDPLYTLTNPVDDAMMEVNVVLRGEDLLSSTPRQIVLYRYLMELGIAKEMPLFGHMPYVMGQGNKKLSKRDPESNLFNHRDNGFIREGLLNYLALLGWSIAPDRDVFSMDEMTEKFDVRDVKANPARFDIDKAISINAEHIRMLEPEDFLRRSVPYLHRDGVVSADNWDALTDREREVLTAAAPLVQPRVRLLGEVAGMVGSLLSTEGYLEPADDAKKQLKDSAGEVLDKAIAALEAVDEADWKTDNLHETLNKALVEEGGYKPRLAFGPVRVAMSGRRVSPPLFESMEIVGKPVSLARLKGLREHL.

Positions 21–31 match the 'HIGH' region motif; that stretch reads PSPTGTPHVGM. Positions 265 to 269 match the 'KMSKS' region motif; that stretch reads KLSKR. Lys-268 lines the ATP pocket.

Belongs to the class-I aminoacyl-tRNA synthetase family. Glutamate--tRNA ligase type 1 subfamily. In terms of assembly, monomer.

It localises to the cytoplasm. The enzyme catalyses tRNA(Glu) + L-glutamate + ATP = L-glutamyl-tRNA(Glu) + AMP + diphosphate. Functionally, catalyzes the attachment of glutamate to tRNA(Glu) in a two-step reaction: glutamate is first activated by ATP to form Glu-AMP and then transferred to the acceptor end of tRNA(Glu). In Bifidobacterium longum (strain DJO10A), this protein is Glutamate--tRNA ligase.